Here is a 104-residue protein sequence, read N- to C-terminus: UPF0134 protein MPN_104 (104 aa).

This sequence belongs to the UPF0134 family.

The polypeptide is UPF0134 protein MPN_104 (Mycoplasma pneumoniae (strain ATCC 29342 / M129 / Subtype 1) (Mycoplasmoides pneumoniae)).